The sequence spans 211 residues: Protein-L-isoaspartate O-methyltransferase (211 aa).

Ser-62 is an active-site residue.

The protein belongs to the methyltransferase superfamily. L-isoaspartyl/D-aspartyl protein methyltransferase family.

It is found in the cytoplasm. It carries out the reaction [protein]-L-isoaspartate + S-adenosyl-L-methionine = [protein]-L-isoaspartate alpha-methyl ester + S-adenosyl-L-homocysteine. In terms of biological role, catalyzes the methyl esterification of L-isoaspartyl residues in peptides and proteins that result from spontaneous decomposition of normal L-aspartyl and L-asparaginyl residues. It plays a role in the repair and/or degradation of damaged proteins. This chain is Protein-L-isoaspartate O-methyltransferase, found in Shewanella amazonensis (strain ATCC BAA-1098 / SB2B).